The chain runs to 209 residues: Ribosomal RNA large subunit methyltransferase E (209 aa).

Residues glycine 63, tryptophan 65, aspartate 83, aspartate 99, and aspartate 124 each coordinate S-adenosyl-L-methionine. Residue lysine 164 is the Proton acceptor of the active site.

It belongs to the class I-like SAM-binding methyltransferase superfamily. RNA methyltransferase RlmE family.

The protein localises to the cytoplasm. The catalysed reaction is uridine(2552) in 23S rRNA + S-adenosyl-L-methionine = 2'-O-methyluridine(2552) in 23S rRNA + S-adenosyl-L-homocysteine + H(+). Specifically methylates the uridine in position 2552 of 23S rRNA at the 2'-O position of the ribose in the fully assembled 50S ribosomal subunit. The polypeptide is Ribosomal RNA large subunit methyltransferase E (Shewanella sp. (strain MR-7)).